The primary structure comprises 573 residues: MLO-like protein 2 (573 aa).

The Extracellular portion of the chain corresponds to 1–15; that stretch reads MADQVKERTLEETST. Residues 16–36 traverse the membrane as a helical segment; that stretch reads WAVAVVCFVLLFISIVLEHSI. Residues 37–61 are Cytoplasmic-facing; the sequence is HKIGTWFKKKHKQALFEALEKVKAE. Residues 62–82 form a helical membrane-spanning segment; it reads LMLLGFISLLLTIGQTPISNI. Residues 83–164 lie on the Extracellular side of the membrane; that stretch reads CISQKVASTM…VSAYGIHQLH (82 aa). Residues 165–185 traverse the membrane as a helical segment; that stretch reads IFIFVLAVVHVVYCIVTYAFG. Residues 186-287 lie on the Cytoplasmic side of the membrane; sequence KIKMRTWKSW…KYIQRSLEKD (102 aa). A helical transmembrane segment spans residues 288–308; it reads FKTVVEISPVIWFVAVLFLLT. Topologically, residues 309 to 317 are extracellular; it reads NSYGLRSYL. The chain crosses the membrane as a helical span at residues 318-338; the sequence is WLPFIPLVVILIVGTKLEVII. Over 339–371 the chain is Cytoplasmic; sequence TKLGLRIQEKGDVVRGAPVVQPGDDLFWFGKPR. A helical transmembrane segment spans residues 372–392; that stretch reads FILFLIHLVLFTNAFQLAFFA. At 393–415 the chain is on the extracellular side; sequence WSTYEFNLNNCFHESTADVVIRL. The helical transmembrane segment at 416–436 threads the bilayer; it reads VVGAVVQILCSYVTLPLYALV. Topologically, residues 437 to 573 are cytoplasmic; sequence TQMGSKMKPT…KSLRDFSFKK (137 aa). The segment at 450–471 is calmodulin-binding; sequence DRVATALKKWHHTAKNETKHGR. A disordered region spans residues 462-573; the sequence is TAKNETKHGR…KSLRDFSFKK (112 aa). 2 stretches are compositionally biased toward polar residues: residues 473 to 490 and 498 to 513; these read SGSN…THGS and NFNN…SPSP. Ser512 carries the post-translational modification Phosphoserine. Positions 522-548 are enriched in basic and acidic residues; that stretch reads EHQFWDPESQHQEAETSTHHSLAHESS.

The protein belongs to the MLO family.

The protein localises to the membrane. Its function is as follows. May be involved in modulation of pathogen defense and leaf cell death. Activity seems to be regulated by Ca(2+)-dependent calmodulin binding and seems not to require heterotrimeric G proteins. The chain is MLO-like protein 2 (MLO2) from Arabidopsis thaliana (Mouse-ear cress).